Consider the following 521-residue polypeptide: Replicase polyprotein 1ab (521 aa).

One can recognise an AV-Nsp11N/CoV-Nsp15M domain in the interval 1–58; it reads GGGGQSFLAADNAVLVSTQCYKRHSYVEIPSNLLVQNGMSLKDGANLYVYKRVNGAFV. The NendoU domain maps to 75 to 216; the sequence is EPRSDVERDF…EDGSIKTCYP (142 aa). Active-site residues include His-104, His-119, Lys-159, Lys-263, Asp-347, Lys-391, and Glu-424. In terms of domain architecture, Nidovirus-type SAM-dependent 2'-O-MTase spans 219–518; that stretch reads QSAWTCGYNM…NTSFTSDSFV (300 aa).

Functionally, the replicase polyprotein of coronaviruses is a multifunctional protein: it contains the activities necessary for the transcription of negative stranded RNA, leader RNA, subgenomic mRNAs and progeny virion RNA as well as proteinases responsible for the cleavage of the polyprotein into functional products. In terms of biological role, nendoU is a Mn(2+)-dependent, uridylate-specific enzyme, which leaves 2'-3'-cyclic phosphates 5' to the cleaved bond. This chain is Replicase polyprotein 1ab (rep), found in Gallus gallus (Chicken).